The primary structure comprises 391 residues: Phosphoglycerate kinase (391 aa).

Residues 21 to 23 (DMN), Arg36, 59 to 62 (HLGR), Arg113, and Arg146 each bind substrate. Residues Lys197, Glu319, and 345-348 (GGDT) each bind ATP.

The protein belongs to the phosphoglycerate kinase family. Monomer.

It localises to the cytoplasm. It catalyses the reaction (2R)-3-phosphoglycerate + ATP = (2R)-3-phospho-glyceroyl phosphate + ADP. It functions in the pathway carbohydrate degradation; glycolysis; pyruvate from D-glyceraldehyde 3-phosphate: step 2/5. The sequence is that of Phosphoglycerate kinase from Chromobacterium violaceum (strain ATCC 12472 / DSM 30191 / JCM 1249 / CCUG 213 / NBRC 12614 / NCIMB 9131 / NCTC 9757 / MK).